The chain runs to 430 residues: Probable transporter SCO4007 (430 aa).

Low complexity predominate over residues 1–17 (MPSSPSSTTPAPTSTPA). The disordered stretch occupies residues 1 to 26 (MPSSPSSTTPAPTSTPAARREPSGKG). A run of 11 helical transmembrane segments spans residues 34-54 (LFLPLIALCTAVTAANIYLAA), 70-90 (AVAWLASVAQLGYAAGLLFFA), 101-121 (LVAALSLVATAALLTAAASAG), 126-146 (AGAVLVASAATVVPQLLVPLV), 159-179 (VAAVIAGLFTGVVAARVLGGL), 188-208 (AVFVGAAVLTAVLGLATAYIL), 244-264 (AGMYGAWSALWTSLALLLTEG), 275-295 (GLFGLFGLAASVVAPLAGGLV), 315-335 (VPLFWLGGQVMAALCAAAVLV), 362-382 (TAYVVAGFAGGALASALAGPA), and 383-403 (FGHWGWGGVCAVAGAWLVLGW).

Belongs to the major facilitator superfamily.

It localises to the cell membrane. In Streptomyces coelicolor (strain ATCC BAA-471 / A3(2) / M145), this protein is Probable transporter SCO4007.